We begin with the raw amino-acid sequence, 452 residues long: AP-4 complex subunit mu-1 (452 aa).

An MHD domain is found at Lys184–Arg451.

It belongs to the adaptor complexes medium subunit family. In terms of assembly, adaptor protein complex 4 (AP-4) is a heterotetramer composed of two large adaptins (epsilon-type subunit AP4E1 and beta-type subunit AP4B1), a medium adaptin (mu-type subunit AP4M1) and a small adaptin (sigma-type AP4S1). Interacts with tyrosine-based sorting signals on the cytoplasmic tail of cargo proteins such as APP, ATG9A, LAMP2 and NAGPA. Interacts with the C-terminal domain of GRID2. Interacts with GRIA1 and GRIA2; the interaction is indirect via CACNG3. Interacts with CACNG3; CACNG3 associates GRIA1 and GRIA2 with the adaptor protein complex 4 (AP-4) to target them to the somatodendritic compartment of neurons. Interacts with HOOK1 and HOOK2; the interactions are direct, mediate the interaction between FTS-Hook-FHIP (FHF) complex and AP-4 and the perinuclear distribution of AP-4.

It localises to the golgi apparatus. The protein localises to the trans-Golgi network membrane. The protein resides in the early endosome. In terms of biological role, component of the adaptor protein complex 4 (AP-4). Adaptor protein complexes are vesicle coat components involved both in vesicle formation and cargo selection. They control the vesicular transport of proteins in different trafficking pathways. AP-4 forms a non clathrin-associated coat on vesicles departing the trans-Golgi network (TGN) and may be involved in the targeting of proteins from the trans-Golgi network (TGN) to the endosomal-lysosomal system. It is also involved in protein sorting to the basolateral membrane in epithelial cells and the proper asymmetric localization of somatodendritic proteins in neurons. Within AP-4, the mu-type subunit AP4M1 is directly involved in the recognition and binding of tyrosine-based sorting signals found in the cytoplasmic part of cargos. The adaptor protein complex 4 (AP-4) may also recognize other types of sorting signal. The protein is AP-4 complex subunit mu-1 of Bos taurus (Bovine).